A 541-amino-acid polypeptide reads, in one-letter code: Protein wntless homolog (541 aa).

The Cytoplasmic segment spans residues 1–15; sequence MAGAIIENMSTKKLC. A helical membrane pass occupies residues 16 to 36; sequence IVGGILLVFQIVAFLVGGLIA. The Lumenal segment spans residues 37-232; the sequence is PAPTTAVPYT…GIHQNGGFTK (196 aa). Positions 101-232 are interaction with Wnt proteins; the sequence is MEMSPWFQFM…GIHQNGGFTK (132 aa). The helical transmembrane segment at 233 to 253 threads the bilayer; sequence VWFAMKTFLTPSIFIIMVWYW. Residues 254 to 268 are Cytoplasmic-facing; sequence RRITMMSRPPVLLEK. A helical transmembrane segment spans residues 269–289; sequence VIFALGISMTFINIPVEWFSI. Over 290–303 the chain is Lumenal; it reads GFDWTWMLLFGDIR. A helical membrane pass occupies residues 304–324; it reads QGIFYAMLLSFWIIFCGEHMM. At 325–331 the chain is on the cytoplasmic side; it reads DQHERNH. Residues 332 to 352 traverse the membrane as a helical segment; the sequence is IAGYWKQVGPIAVGSFCLFIF. The Lumenal portion of the chain corresponds to 353–380; it reads DMCERGVQLTNPFYSIWTTDVGTELAMA. A helical transmembrane segment spans residues 381 to 401; the sequence is FIIVAGICLCLYFLFLCFMVF. Topologically, residues 402–431 are cytoplasmic; it reads QVFRNISGKQSSLPAMSKVRRLHYEGLIFR. A helical membrane pass occupies residues 432 to 452; that stretch reads FKFLMLITLACAAMTVIFFIV. At 453–471 the chain is on the lumenal side; it reads SQVSEGHWKWGGVTVQVSS. Residues 472 to 492 traverse the membrane as a helical segment; it reads AFFTGIYGMWNLYVFALMFLY. Over 493–541 the chain is Cytoplasmic; it reads APSHKNYGEDQSNGDLGVHSGEELQLTTTITHVDGPTEIYKLTRKEAQE.

This sequence belongs to the wntless family. In terms of assembly, interacts with WNT3A. Interacts with WNT1, WNT3 and WNT5. In terms of processing, N-glycosylated. In terms of tissue distribution, expressed in the brain, skeletal muscle, heart muscle, lung, gut, liver, and kidney (at protein level). In the brain, expressed in the cortex, striatum, hippocampus and to a lesser extent in the cerebellum (at protein level). Expressed in kidney, lung, skin, intestine, brain, spinal cord, skeleton, eyes, excretion glands, tooth and palatal shelves. In the cerebellum, expressed in Purkinje cells.

The protein resides in the golgi apparatus membrane. It is found in the cytoplasmic vesicle membrane. Its subcellular location is the cell membrane. The protein localises to the endoplasmic reticulum membrane. It localises to the early endosome membrane. Functionally, regulates Wnt proteins sorting and secretion in a feedback regulatory mechanism. This reciprocal interaction plays a key role in the regulation of expression, subcellular location, binding and organelle-specific association of Wnt proteins. Also plays an important role in establishment of the anterior-posterior body axis formation during development. In Mus musculus (Mouse), this protein is Protein wntless homolog (Wls).